The sequence spans 174 residues: Shikimate kinase (174 aa).

ATP is bound at residue 14–19 (GAGKST). A Mg(2+)-binding site is contributed by Ser-18. Positions 36, 60, and 82 each coordinate substrate. Arg-120 provides a ligand contact to ATP. Arg-139 lines the substrate pocket. ATP is bound at residue Gln-156.

It belongs to the shikimate kinase family. As to quaternary structure, monomer. Requires Mg(2+) as cofactor.

It localises to the cytoplasm. The enzyme catalyses shikimate + ATP = 3-phosphoshikimate + ADP + H(+). Its pathway is metabolic intermediate biosynthesis; chorismate biosynthesis; chorismate from D-erythrose 4-phosphate and phosphoenolpyruvate: step 5/7. In terms of biological role, catalyzes the specific phosphorylation of the 3-hydroxyl group of shikimic acid using ATP as a cosubstrate. The polypeptide is Shikimate kinase (Vibrio cholerae serotype O1 (strain ATCC 39541 / Classical Ogawa 395 / O395)).